The sequence spans 463 residues: Autophagy-related protein 36 (463 aa).

An RING-type; atypical zinc finger spans residues 5 to 45; sequence CSICLEVLVDKEAFTEPCLHYYHNECIKEWTKRANTCPKCR. A PHD-type zinc finger spans residues 85–131; sequence TNLCALCEDPSTSLIYCESCGGSFHFNCIGIGDELDSEWCCPLCGMF. Over residues 229–242 the composition is skewed to polar residues; sequence TQNSQSSEFSTENN. Positions 229 to 281 are disordered; the sequence is TQNSQSSEFSTENNVVPLKNTHELGRKLKKPRRASGIKKNVVERSSSHQSTQI. Residues 255 to 264 show a composition bias toward basic residues; it reads KLKKPRRASG.

Interacts with ATG28.

In terms of biological role, micropexophagy-specific protein required for efficient micropexophagic apparatus (MIPA) formation but not for general autophagy. The protein is Autophagy-related protein 36 (ATG35) of Komagataella phaffii (strain GS115 / ATCC 20864) (Yeast).